The primary structure comprises 235 residues: 2-C-methyl-D-erythritol 4-phosphate cytidylyltransferase (235 aa).

Belongs to the IspD/TarI cytidylyltransferase family. IspD subfamily.

The catalysed reaction is 2-C-methyl-D-erythritol 4-phosphate + CTP + H(+) = 4-CDP-2-C-methyl-D-erythritol + diphosphate. It participates in isoprenoid biosynthesis; isopentenyl diphosphate biosynthesis via DXP pathway; isopentenyl diphosphate from 1-deoxy-D-xylulose 5-phosphate: step 2/6. Catalyzes the formation of 4-diphosphocytidyl-2-C-methyl-D-erythritol from CTP and 2-C-methyl-D-erythritol 4-phosphate (MEP). The protein is 2-C-methyl-D-erythritol 4-phosphate cytidylyltransferase of Pseudomonas fluorescens (strain Pf0-1).